The sequence spans 141 residues: 6,7-dimethyl-8-ribityllumazine synthase (141 aa).

5-amino-6-(D-ribitylamino)uracil-binding positions include F14, 46-48, and 70-72; these read VFD and CVI. 75–76 contributes to the (2S)-2-hydroxy-3-oxobutyl phosphate binding site; it reads ET. The active-site Proton donor is H78. Residue L103 coordinates 5-amino-6-(D-ribitylamino)uracil. Position 118 (R118) interacts with (2S)-2-hydroxy-3-oxobutyl phosphate.

As to quaternary structure, forms an icosahedral capsid composed of 60 subunits, arranged as a dodecamer of pentamers.

It catalyses the reaction (2S)-2-hydroxy-3-oxobutyl phosphate + 5-amino-6-(D-ribitylamino)uracil = 6,7-dimethyl-8-(1-D-ribityl)lumazine + phosphate + 2 H2O + H(+). Its pathway is cofactor biosynthesis; riboflavin biosynthesis; riboflavin from 2-hydroxy-3-oxobutyl phosphate and 5-amino-6-(D-ribitylamino)uracil: step 1/2. Functionally, catalyzes the formation of 6,7-dimethyl-8-ribityllumazine by condensation of 5-amino-6-(D-ribitylamino)uracil with 3,4-dihydroxy-2-butanone 4-phosphate. This is the penultimate step in the biosynthesis of riboflavin. The polypeptide is 6,7-dimethyl-8-ribityllumazine synthase (ribH) (Methanocaldococcus jannaschii (strain ATCC 43067 / DSM 2661 / JAL-1 / JCM 10045 / NBRC 100440) (Methanococcus jannaschii)).